Here is a 134-residue protein sequence, read N- to C-terminus: MGKDTLSEIVTSIRNADMAKKETVRITFTNIAQNIVTILLREGFIKNAREHRESKKSFLVLTLRHRRNRKGPSRTLFNLKRVSRPGLRIYSNYQKIPRILGGMGVAILSTSKGIMTDREARLKRIGGEILLYIW.

It belongs to the universal ribosomal protein uS8 family. Part of the 30S ribosomal subunit.

Its subcellular location is the plastid. The protein resides in the chloroplast. In terms of biological role, one of the primary rRNA binding proteins, it binds directly to 16S rRNA central domain where it helps coordinate assembly of the platform of the 30S subunit. The polypeptide is Small ribosomal subunit protein uS8c (rps8) (Pelargonium hortorum (Common geranium)).